A 929-amino-acid chain; its full sequence is Protocadherin gamma-B7 (929 aa).

Residues 1–30 (MGGSCAQRRRAGPRQVLFPLLLPLFYPTLC) form the signal peptide. Cadherin domains follow at residues 31–133 (EPIR…APQF), 134–242 (RKDE…PPVF), 243–347 (SQDV…SPEI), 348–452 (IITS…APVF), 453–562 (GQSA…APRV), and 570–675 (DGSA…LPDF). At 31–691 (EPIRYSIPEE…SDSQAEMQFY (661 aa)) the chain is on the extracellular side. N-linked (GlcNAc...) asparagine glycans are attached at residues Asn-419 and Asn-545. A helical membrane pass occupies residues 692–712 (LVVALALISVLFLLAVILAIA). Residues 713 to 929 (LRLRQSFSPT…KKKSGKKEKK (217 aa)) lie on the Cytoplasmic side of the membrane. 2 disordered regions span residues 806–838 (QAPP…WPNN) and 899–929 (ATLT…KEKK). Residues 807–838 (APPNTDWRFSQAQRPGTSGSQNGDDTGTWPNN) show a composition bias toward polar residues. A compositionally biased stretch (basic residues) spans 919 to 929 (NKKKSGKKEKK).

Its subcellular location is the cell membrane. Functionally, potential calcium-dependent cell-adhesion protein. May be involved in the establishment and maintenance of specific neuronal connections in the brain. This Homo sapiens (Human) protein is Protocadherin gamma-B7 (PCDHGB7).